The sequence spans 83 residues: UPF0512 protein G (83 aa).

Belongs to the UPF0512 family.

In Dictyostelium discoideum (Social amoeba), this protein is UPF0512 protein G.